A 316-amino-acid chain; its full sequence is Cuticle collagen 13 (316 aa).

An N-terminal signal peptide occupies residues 1-36 (MSEDLKQIAQETESLRKVAFFGIAVSTIATLTAIIA). Composition is skewed to low complexity over residues 127-157 (SGAA…PGQD) and 183-204 (APGQ…GAAL). A disordered region spans residues 127–316 (SGAAGPAGSP…CPPPRTAPGY (190 aa)). 5 triple-helical region regions span residues 128–157 (GAAG…PGQD), 176–202 (GPPG…SGGA), 206–235 (GPPG…PGQV), 240–266 (GTPG…AGSS), and 269–304 (GGPG…EGAC). Over residues 205–217 (PGPPGPAGPPGPA) the composition is skewed to pro residues. Over residues 219–234 (QPGSNGNAGAPGAPGQ) the composition is skewed to low complexity. Residues 241–251 (TPGPAGPPGSP) are compositionally biased toward pro residues. Low complexity-rich tracts occupy residues 256-266 (APGQPGQAGSS) and 276-295 (DAGA…PGQD). Residues 307–316 (CPPPRTAPGY) show a composition bias toward pro residues.

It belongs to the cuticular collagen family. In terms of assembly, collagen polypeptide chains are complexed within the cuticle by disulfide bonds and other types of covalent cross-links.

Its function is as follows. Nematode cuticles are composed largely of collagen-like proteins. The cuticle functions both as an exoskeleton and as a barrier to protect the worm from its environment. This Caenorhabditis elegans protein is Cuticle collagen 13 (col-13).